The chain runs to 684 residues: Endo-1,4-beta-xylanase A (684 aa).

The first 34 residues, 1–34 (MMRSLKSRKLVFILAMLFLINAIVSLKFITYSSA), serve as a signal peptide directing secretion. CBM-cenC domains lie at 40–190 (KSKY…IKDL) and 193–342 (AYVL…ISDE). Residues 350 to 678 (DYNLPSLCEK…KFAFWSLIDP (329 aa)) form the GH10 domain. Catalysis depends on Glu-490, which acts as the Proton donor. Catalysis depends on Glu-598, which acts as the Nucleophile.

Belongs to the glycosyl hydrolase 10 (cellulase F) family.

It catalyses the reaction Endohydrolysis of (1-&gt;4)-beta-D-xylosidic linkages in xylans.. It functions in the pathway glycan degradation; xylan degradation. The polypeptide is Endo-1,4-beta-xylanase A (xynA) (Caldicellulosiruptor sp. (strain Rt8B.4)).